We begin with the raw amino-acid sequence, 318 residues long: C1GALT1-specific chaperone 1 (318 aa).

Residues 1–6 are Cytoplasmic-facing; sequence MLSESS. Residues 7–26 form a helical; Signal-anchor for type II membrane protein membrane-spanning segment; the sequence is SFLKGVMLGSIFCALITMLG. Over 27–318 the chain is Lumenal; sequence HIRIGHGSRM…FLPPNGSDND (292 aa).

This sequence belongs to the glycosyltransferase 31 family. Beta3-Gal-T subfamily. As to quaternary structure, associates with core 1 beta-3-galactosyltransferase (C1GALT1), probably not with the soluble active form.

Its subcellular location is the membrane. Probable chaperone required for the generation of 1 O-glycan Gal-beta1-3GalNAc-alpha1-Ser/Thr (T antigen), which is a precursor for many extended O-glycans in glycoproteins. Probably acts as a specific molecular chaperone assisting the folding/stability of core 1 beta-3-galactosyltransferase (C1GALT1). This is C1GALT1-specific chaperone 1 (C1GALT1C1) from Bos taurus (Bovine).